Here is a 170-residue protein sequence, read N- to C-terminus: Crossover junction endodeoxyribonuclease RuvC (170 aa).

Residues Asp-9, Glu-70, and Asp-145 contribute to the active site. Residues Asp-9, Glu-70, and Asp-145 each contribute to the Mg(2+) site.

The protein belongs to the RuvC family. As to quaternary structure, homodimer which binds Holliday junction (HJ) DNA. The HJ becomes 2-fold symmetrical on binding to RuvC with unstacked arms; it has a different conformation from HJ DNA in complex with RuvA. In the full resolvosome a probable DNA-RuvA(4)-RuvB(12)-RuvC(2) complex forms which resolves the HJ. The cofactor is Mg(2+).

It is found in the cytoplasm. It catalyses the reaction Endonucleolytic cleavage at a junction such as a reciprocal single-stranded crossover between two homologous DNA duplexes (Holliday junction).. The RuvA-RuvB-RuvC complex processes Holliday junction (HJ) DNA during genetic recombination and DNA repair. Endonuclease that resolves HJ intermediates. Cleaves cruciform DNA by making single-stranded nicks across the HJ at symmetrical positions within the homologous arms, yielding a 5'-phosphate and a 3'-hydroxyl group; requires a central core of homology in the junction. The consensus cleavage sequence is 5'-(A/T)TT(C/G)-3'. Cleavage occurs on the 3'-side of the TT dinucleotide at the point of strand exchange. HJ branch migration catalyzed by RuvA-RuvB allows RuvC to scan DNA until it finds its consensus sequence, where it cleaves and resolves the cruciform DNA. This chain is Crossover junction endodeoxyribonuclease RuvC, found in Chlamydia trachomatis serovar L2 (strain ATCC VR-902B / DSM 19102 / 434/Bu).